We begin with the raw amino-acid sequence, 132 residues long: Small ribosomal subunit protein uS8 (132 aa).

This sequence belongs to the universal ribosomal protein uS8 family. In terms of assembly, part of the 30S ribosomal subunit. Contacts proteins S5 and S12.

In terms of biological role, one of the primary rRNA binding proteins, it binds directly to 16S rRNA central domain where it helps coordinate assembly of the platform of the 30S subunit. This is Small ribosomal subunit protein uS8 from Kineococcus radiotolerans (strain ATCC BAA-149 / DSM 14245 / SRS30216).